A 251-amino-acid chain; its full sequence is MTSVCDATNEDKENGSESTESQDKEHPRVLIPELCRLFYQLGWVTGTGGGLSLRRGDQIYIAPSGVQKERLQPDDMFVCDVEERDISSPPPWKKLKKSQCTPLFMNAFTMRAAQAVIHTHSKAAVMATLFYPGKEFRITHQEMIKGIRKGTSSTNYRYDETLVVPIIENTPEERDLKERMALAMEQYPDSCAVLVRRHGVYVWGESWEKAKTMCECYDYLFDIAVQMKQSGMDPSAPPIEENHYYDVQQSQ.

The segment at 1 to 26 is disordered; it reads MTSVCDATNEDKENGSESTESQDKEH. Residues 9 to 26 show a composition bias toward basic and acidic residues; that stretch reads NEDKENGSESTESQDKEH. Cys-100 is a substrate binding site. 2 residues coordinate Zn(2+): His-118 and His-120. Catalysis depends on Glu-142, which acts as the Proton donor/acceptor. Residue His-198 participates in Zn(2+) binding. The tract at residues 232-251 is disordered; the sequence is MDPSAPPIEENHYYDVQQSQ.

It belongs to the aldolase class II family. MtnB subfamily. Requires Zn(2+) as cofactor.

The protein resides in the cytoplasm. The catalysed reaction is 5-(methylsulfanyl)-D-ribulose 1-phosphate = 5-methylsulfanyl-2,3-dioxopentyl phosphate + H2O. It participates in amino-acid biosynthesis; L-methionine biosynthesis via salvage pathway; L-methionine from S-methyl-5-thio-alpha-D-ribose 1-phosphate: step 2/6. In terms of biological role, catalyzes the dehydration of methylthioribulose-1-phosphate (MTRu-1-P) into 2,3-diketo-5-methylthiopentyl-1-phosphate (DK-MTP-1-P). Functions in the methionine salvage pathway. May play a role in apoptosis. This is Methylthioribulose-1-phosphate dehydratase from Salmo salar (Atlantic salmon).